A 155-amino-acid polypeptide reads, in one-letter code: cAMP-dependent protein kinase type II-alpha regulatory subunit (155 aa).

A disordered region spans residues 1 to 34; the sequence is SGSQDLEPSSGLVTDAIADSESEDDEDLDVPIPS. The segment at 1 to 81 is dimerization and phosphorylation; it reads SGSQDLEPSS…LQEACKDILL (81 aa). Acidic residues predominate over residues 18 to 29; the sequence is ADSESEDDEDLD. Residues Ser-20 and Ser-22 each carry the phosphoserine modification. At Ser-41 the chain carries Phosphoserine; by PKA. Residues 82-155 and Glu-150 each bind 3',5'-cyclic AMP; that span reads FKNL…ALMY.

It belongs to the cAMP-dependent kinase regulatory chain family. In terms of assembly, the inactive form of the enzyme is composed of two regulatory chains and two catalytic chains. Activation by cAMP produces two active catalytic monomers and a regulatory dimer that binds four cAMP molecules. Interacts with AKAP4 and CBFA2T3. Interacts with the phosphorylated form of PJA2. Interacts with MYRIP; this interaction may link PKA to components of the exocytosis machinery, thus facilitating exocytosis, including insulin release. Forms a complex composed of PRKAR2A, GSK3B and GSKIP through GSKIP interaction; facilitates PKA-induced phosphorylation and regulates GSK3B activity. Interacts with ADCY8; inhibits adenylate cyclase activity through PKA phosphorylation. Phosphorylated by the activated catalytic chain. In terms of tissue distribution, four types of regulatory chains are found: I-alpha, I-beta, II-alpha, and II-beta. Their expression varies among tissues and is in some cases constitutive and in others inducible.

The protein localises to the cytoplasm. The protein resides in the cell membrane. Its function is as follows. Regulatory subunit of the cAMP-dependent protein kinases involved in cAMP signaling in cells. Type II regulatory chains mediate membrane association by binding to anchoring proteins, including the MAP2 kinase. The chain is cAMP-dependent protein kinase type II-alpha regulatory subunit (PRKAR2A) from Sus scrofa (Pig).